Consider the following 68-residue polypeptide: Palustrin-1c (68 aa).

A signal peptide spans 1–22; sequence MFTTKKSLLLLFFLGTISLSLC. Positions 23 to 39 are excised as a propeptide; sequence EEERGADEEEGDGEKLT. A disulfide bridge links C62 with C68.

Expressed by the skin glands.

It localises to the secreted. Functionally, antimicrobial activity against Gram-negative bacterium E.coli. Stimulates insulin release. The protein is Palustrin-1c of Lithobates palustris (Pickerel frog).